The chain runs to 208 residues: Small ribosomal subunit protein uS4 (208 aa).

The 63-residue stretch at 95–157 folds into the S4 RNA-binding domain; that stretch reads RRIDNVVYRA…DSLKKLVRSN (63 aa).

It belongs to the universal ribosomal protein uS4 family. Part of the 30S ribosomal subunit. Contacts protein S5. The interaction surface between S4 and S5 is involved in control of translational fidelity.

Its function is as follows. One of the primary rRNA binding proteins, it binds directly to 16S rRNA where it nucleates assembly of the body of the 30S subunit. In terms of biological role, with S5 and S12 plays an important role in translational accuracy. The chain is Small ribosomal subunit protein uS4 from Borrelia hermsii (strain HS1 / DAH).